The primary structure comprises 150 residues: Endoribonuclease YbeY (150 aa).

Zn(2+)-binding residues include His-112, His-116, and Asp-122.

The protein belongs to the endoribonuclease YbeY family. It depends on Zn(2+) as a cofactor.

It is found in the cytoplasm. Its function is as follows. Single strand-specific metallo-endoribonuclease involved in late-stage 70S ribosome quality control and in maturation of the 3' terminus of the 16S rRNA. The sequence is that of Endoribonuclease YbeY from Protochlamydia amoebophila (strain UWE25).